The sequence spans 437 residues: Bile acid CoA-transferase BaiK (437 aa).

Aspartate 171 (nucleophile) is an active-site residue.

It belongs to the CoA-transferase III family.

It carries out the reaction deoxycholoyl-CoA + cholate = choloyl-CoA + deoxycholate. The enzyme catalyses allodeoxycholoyl-CoA + cholate = allodeoxycholate + choloyl-CoA. It catalyses the reaction allocholate + deoxycholoyl-CoA = allocholoyl-CoA + deoxycholate. The catalysed reaction is allocholate + allodeoxycholoyl-CoA = allocholoyl-CoA + allodeoxycholate. It carries out the reaction ursodeoxycholate + deoxycholoyl-CoA = ursodeoxycholoyl-CoA + deoxycholate. The enzyme catalyses allodeoxycholoyl-CoA + ursodeoxycholate = ursodeoxycholoyl-CoA + allodeoxycholate. The protein operates within lipid metabolism; bile acid biosynthesis. Its function is as follows. Functions in the bile acid 7alpha-dehydroxylation pathway, which forms secondary bile acids via the 7alpha-dehydroxylation of primary bile acids, and is carried out by intestinal anaerobic bacteria. Acts as a bile acid CoA transferase with broad bile acid substrate specificity. Catalyzes the transfer of the CoA moiety of secondary bile acid-CoA compounds to primary bile acids. Can use deoxycholoyl-CoA and allodeoxycholoyl-CoA as bile acid CoA donors and cholate, allocholate and ursodeoxycholate as bile acid CoA acceptors. Shows no activity when lithocholoyl-CoA is used as the CoA donor. This is Bile acid CoA-transferase BaiK from Clostridium scindens (strain JCM 10418 / VPI 12708).